A 364-amino-acid polypeptide reads, in one-letter code: BTB/POZ and TAZ domain-containing protein 2 (364 aa).

The BTB domain maps to 34 to 106 (SDVEIVTSDN…LYSSSLTEDE (73 aa)). The Nuclear localization signal motif lies at 203 to 212 (RKKRRRRHRK). The segment at 215–316 (DLYMQLSEAM…PDSCRVPLCR (102 aa)) adopts a TAZ-type zinc-finger fold. The segment at 327-350 (KMGEDTKWKLLVTRVVSAKAMTSL) is caM-binding.

As to quaternary structure, interacts with CUL3A. Interacts with GTE11/BET10 through the BTB domain. In terms of tissue distribution, preferentially expressed in young leaves and roots.

The protein resides in the nucleus. Its subcellular location is the cytoplasm. It functions in the pathway protein modification; protein ubiquitination. May act as a substrate-specific adapter of an E3 ubiquitin-protein ligase complex (CUL3-RBX1-BTB) which mediates the ubiquitination and subsequent proteasomal degradation of target proteins. Plays a key role as a component of the TAC1-mediated telomerase activation pathway certainly by targeting a telomerase repressor to degradation. Seems to occupy an integral position in a complex signaling network that perceives, integrates, and responds to multiple, and sometimes competing, signals. Enhances responses to auxin in postgermination and vegetative development. Also negatively regulates ABA- and sugar-mediated inhibition of the germination. Essential for female and male gametophyte development. This Arabidopsis thaliana (Mouse-ear cress) protein is BTB/POZ and TAZ domain-containing protein 2 (BT2).